Consider the following 193-residue polypeptide: Ion-translocating oxidoreductase complex subunit A (193 aa).

6 helical membrane passes run 5–25 (FLLF…FLGL), 39–59 (IGMG…SWLV), 62–82 (FILL…LVIA), 102–122 (LLGI…VALL), 134–154 (AIYG…FAAI), and 171–191 (SIGL…SGLV).

Belongs to the NqrDE/RnfAE family. As to quaternary structure, the complex is composed of six subunits: RnfA, RnfB, RnfC, RnfD, RnfE and RnfG.

Its subcellular location is the cell inner membrane. Its function is as follows. Part of a membrane-bound complex that couples electron transfer with translocation of ions across the membrane. The protein is Ion-translocating oxidoreductase complex subunit A of Photorhabdus laumondii subsp. laumondii (strain DSM 15139 / CIP 105565 / TT01) (Photorhabdus luminescens subsp. laumondii).